We begin with the raw amino-acid sequence, 184 residues long: Ribosome-recycling factor (184 aa).

This sequence belongs to the RRF family.

It is found in the cytoplasm. Responsible for the release of ribosomes from messenger RNA at the termination of protein biosynthesis. May increase the efficiency of translation by recycling ribosomes from one round of translation to another. This Acinetobacter baylyi (strain ATCC 33305 / BD413 / ADP1) protein is Ribosome-recycling factor.